The primary structure comprises 860 residues: Leucine--tRNA ligase (860 aa).

A 'HIGH' region motif is present at residues 42–52 (PYPSGRLHMGH). The short motif at 619–623 (KMSKS) is the 'KMSKS' region element. Lys622 lines the ATP pocket.

It belongs to the class-I aminoacyl-tRNA synthetase family.

The protein resides in the cytoplasm. It carries out the reaction tRNA(Leu) + L-leucine + ATP = L-leucyl-tRNA(Leu) + AMP + diphosphate. The chain is Leucine--tRNA ligase from Sodalis glossinidius (strain morsitans).